The primary structure comprises 321 residues: DNA repair and recombination protein RadA (321 aa).

Position 111-118 (111-118 (GEFGSGKT)) interacts with ATP.

It belongs to the eukaryotic RecA-like protein family.

In terms of biological role, involved in DNA repair and in homologous recombination. Binds and assemble on single-stranded DNA to form a nucleoprotein filament. Hydrolyzes ATP in a ssDNA-dependent manner and promotes DNA strand exchange between homologous DNA molecules. This chain is DNA repair and recombination protein RadA, found in Sulfolobus acidocaldarius (strain ATCC 33909 / DSM 639 / JCM 8929 / NBRC 15157 / NCIMB 11770).